The following is a 357-amino-acid chain: Putative F-box/kelch-repeat protein At5g38680 (357 aa).

The region spanning 14-61 (NSNPSLPDALIISCIARVSRLYYPILSFVSKSFRSLLASPELYKERSL) is the F-box domain. 4 Kelch repeats span residues 131 to 175 (NIYN…VLDG), 177 to 224 (IYVA…SKSL), 226 to 267 (IDEK…YCEI), and 268 to 313 (ENVL…GGKK).

This chain is Putative F-box/kelch-repeat protein At5g38680, found in Arabidopsis thaliana (Mouse-ear cress).